We begin with the raw amino-acid sequence, 132 residues long: Translation initiation factor 5A (132 aa).

K36 bears the Hypusine mark.

It belongs to the eIF-5A family.

The protein resides in the cytoplasm. Functionally, functions by promoting the formation of the first peptide bond. This chain is Translation initiation factor 5A, found in Methanosphaera stadtmanae (strain ATCC 43021 / DSM 3091 / JCM 11832 / MCB-3).